Here is a 502-residue protein sequence, read N- to C-terminus: MQIKAEEISKIIEDQIQNYEQRVEMSETGTVLYVGDGIARVYGVQNAMSMELLEFPGGIMGMVLNLEEDNVGVALLGSDVGIKEGDPVKRTGKIFSVPVGDGVMGRVLNPLGEPIDGLGPIDAAEVRPVEIKAPGIIARKSVHEPMPTGLKAIDAMTPIGRGQRELIIGDRQTGKTAVCLDAILAQKETGIHCFYVAIGQKKSSVALVADTLRRHGALEYTTIISATASDPAPLQYIAAYTGCTMAEYYRDSGKHALIIYDDLSKQAVAYRQMSLLLRRPPGREAFPGDVFYLHSRLLERAAKVNDSLGAGSLTALPIIETQAGDVSAYIPTNVISITDGQVYLEPNLFNAGVRPAINVGLSVSRVGGAAQIKAMKQVAGTMRLDLAQYRELAAFAQFGSDLDKGTKAKLDRGARLVELLKQPQYQPMPSNEQVASIYAATRGHMDDVPVEDIRRFEAALLTFLRDTRKDVLDAIKEKQVIDEAVEKALTEAIAAFKQGWTA.

An ATP-binding site is contributed by 169–176 (GDRQTGKT).

It belongs to the ATPase alpha/beta chains family. In terms of assembly, F-type ATPases have 2 components, CF(1) - the catalytic core - and CF(0) - the membrane proton channel. CF(1) has five subunits: alpha(3), beta(3), gamma(1), delta(1), epsilon(1). CF(0) has three main subunits: a(1), b(2) and c(9-12). The alpha and beta chains form an alternating ring which encloses part of the gamma chain. CF(1) is attached to CF(0) by a central stalk formed by the gamma and epsilon chains, while a peripheral stalk is formed by the delta and b chains.

The protein localises to the cell inner membrane. The enzyme catalyses ATP + H2O + 4 H(+)(in) = ADP + phosphate + 5 H(+)(out). Functionally, produces ATP from ADP in the presence of a proton gradient across the membrane. The alpha chain is a regulatory subunit. This Desulfovibrio desulfuricans (strain ATCC 27774 / DSM 6949 / MB) protein is ATP synthase subunit alpha.